Here is a 311-residue protein sequence, read N- to C-terminus: 4-hydroxy-tetrahydrodipicolinate synthase (311 aa).

Thr51 serves as a coordination point for pyruvate. Residue Tyr140 is the Proton donor/acceptor of the active site. The active-site Schiff-base intermediate with substrate is Lys168. Ile209 lines the pyruvate pocket.

It belongs to the DapA family. As to quaternary structure, homotetramer; dimer of dimers.

The protein resides in the cytoplasm. It carries out the reaction L-aspartate 4-semialdehyde + pyruvate = (2S,4S)-4-hydroxy-2,3,4,5-tetrahydrodipicolinate + H2O + H(+). It participates in amino-acid biosynthesis; L-lysine biosynthesis via DAP pathway; (S)-tetrahydrodipicolinate from L-aspartate: step 3/4. Functionally, catalyzes the condensation of (S)-aspartate-beta-semialdehyde [(S)-ASA] and pyruvate to 4-hydroxy-tetrahydrodipicolinate (HTPA). The chain is 4-hydroxy-tetrahydrodipicolinate synthase from Streptococcus gordonii (strain Challis / ATCC 35105 / BCRC 15272 / CH1 / DL1 / V288).